The following is a 402-amino-acid chain: Myb-related protein 1 (402 aa).

The 61-residue stretch at 42 to 102 (TDAKPRLKWT…HLQKYRLSKN (61 aa)) folds into the HTH myb-type domain. A DNA-binding region (H-T-H motif) is located at residues 73–98 (PKTIMKVMGIPGLTLYHLKSHLQKYR). Residues 148 to 168 (SDALQMQIEVQRRLHEQLEVQ) adopt a coiled-coil conformation. An LHEQLE motif is present at residues 161 to 166 (LHEQLE). Over residues 238 to 260 (QQMQKTYPPNSSLDSCLTSSEGT) the composition is skewed to polar residues. Disordered regions lie at residues 238–266 (QQMQ…APKM), 344–363 (EHRG…FNEN), and 382–402 (HDEN…FSWN).

It belongs to the MYB-CC family. Isoforms 1 and 2: homodimer. Isoform 3: loss of dimerization. Expressed in phloem and/or cambium.

It localises to the nucleus. Its function is as follows. Transcription factor that may act on the GAL1 promoter. Acts redundantly with MYR2 as a repressor of flowering and organ elongation under decreased light intensity. Represses gibberellic acid (GA)-dependent responses and affects levels of bioactive GA. The chain is Myb-related protein 1 from Arabidopsis thaliana (Mouse-ear cress).